We begin with the raw amino-acid sequence, 650 residues long: Chaperone protein DnaK (650 aa).

Threonine 200 is modified (phosphothreonine; by autocatalysis). Low complexity predominate over residues 613–634 (QAGAAGAAGAAAAEGAAQGGAQ). Residues 613–637 (QAGAAGAAGAAAAEGAAQGGAQTAD) are disordered.

The protein belongs to the heat shock protein 70 family.

Acts as a chaperone. This Burkholderia thailandensis (strain ATCC 700388 / DSM 13276 / CCUG 48851 / CIP 106301 / E264) protein is Chaperone protein DnaK.